Here is a 449-residue protein sequence, read N- to C-terminus: Adenylosuccinate synthetase isozyme 1 B (449 aa).

Residues 34–40 and 62–64 each bind GTP; these read GDEGKGK and GHT. The active-site Proton acceptor is aspartate 35. The Mg(2+) site is built by aspartate 35 and glycine 62. Position 35 (aspartate 35) interacts with substrate. IMP-binding positions include 35–38, 60–63, threonine 155, arginine 169, asparagine 248, threonine 263, and arginine 327; these read DEGK and NAGH. Histidine 63 functions as the Proton donor in the catalytic mechanism. 323-329 is a substrate binding site; sequence VTTGRKR. GTP is bound by residues arginine 329, 355 to 357, and 437 to 440; these read KLD and GVGK.

It belongs to the adenylosuccinate synthetase family. Homodimer. It depends on Mg(2+) as a cofactor.

The protein resides in the cytoplasm. The catalysed reaction is IMP + L-aspartate + GTP = N(6)-(1,2-dicarboxyethyl)-AMP + GDP + phosphate + 2 H(+). Its pathway is purine metabolism; AMP biosynthesis via de novo pathway; AMP from IMP: step 1/2. Component of the purine nucleotide cycle (PNC), which interconverts IMP and AMP to regulate the nucleotide levels in various tissues, and which contributes to glycolysis and ammoniagenesis. Catalyzes the first committed step in the biosynthesis of AMP from IMP. This chain is Adenylosuccinate synthetase isozyme 1 B (adss1b), found in Salmo salar (Atlantic salmon).